Reading from the N-terminus, the 179-residue chain is Adenine phosphoribosyltransferase (179 aa).

This sequence belongs to the purine/pyrimidine phosphoribosyltransferase family. In terms of assembly, homodimer.

It localises to the cytoplasm. The enzyme catalyses AMP + diphosphate = 5-phospho-alpha-D-ribose 1-diphosphate + adenine. It participates in purine metabolism; AMP biosynthesis via salvage pathway; AMP from adenine: step 1/1. Its function is as follows. Catalyzes a salvage reaction resulting in the formation of AMP, that is energically less costly than de novo synthesis. In Mycolicibacterium gilvum (strain PYR-GCK) (Mycobacterium gilvum (strain PYR-GCK)), this protein is Adenine phosphoribosyltransferase.